Consider the following 898-residue polypeptide: DNA-directed DNA polymerase (898 aa).

The interval 101–337 (YDRKFVRVAN…VQAIDKIRGF (237 aa)) is 3'-5'exonuclease. Positions 112, 114, and 219 each coordinate Mg(2+). Positions 245-261 (VKSKLIQNMYGSKEIYS) are beta hairpin. Mg(2+) contacts are provided by Asp324, Asp408, and Leu409. The segment at 377–898 (IPQQGSHVKQ…EKASLDFLFG (522 aa)) is polymerase. Residues 411-413 (SLY), Arg479, and Lys557 contribute to the substrate site. Mg(2+) is bound at residue Asp620. The segment at 702–705 (KKRY) is binding of DNA in B-conformation. The tract at residues 893-898 (LDFLFG) is interaction with the polymerase clamp.

This sequence belongs to the DNA polymerase type-B family. Interacts with the polymerase clamp; this interaction constitutes the polymerase holoenzyme. Interacts with the helicase assembly factor. Part of the replicase complex that includes the DNA polymerase, the polymerase clamp, the clamp loader complex, the single-stranded DNA binding protein, the primase, the helicase and the helicase assembly factor. It depends on Mg(2+) as a cofactor.

The catalysed reaction is DNA(n) + a 2'-deoxyribonucleoside 5'-triphosphate = DNA(n+1) + diphosphate. Functionally, replicates the viral genomic DNA. This polymerase possesses two enzymatic activities: DNA synthesis (polymerase) and an exonucleolytic activity that degrades single-stranded DNA in the 3'- to 5'-direction for proofreading purpose. The polypeptide is DNA-directed DNA polymerase (43) (Enterobacteria phage T4 (Bacteriophage T4)).